A 168-amino-acid chain; its full sequence is ATP synthase subunit b (168 aa).

A helical membrane pass occupies residues 11–31 (NTVLGNIIVVSGAFIILLVLL).

The protein belongs to the ATPase B chain family. F-type ATPases have 2 components, F(1) - the catalytic core - and F(0) - the membrane proton channel. F(1) has five subunits: alpha(3), beta(3), gamma(1), delta(1), epsilon(1). F(0) has three main subunits: a(1), b(2) and c(10-14). The alpha and beta chains form an alternating ring which encloses part of the gamma chain. F(1) is attached to F(0) by a central stalk formed by the gamma and epsilon chains, while a peripheral stalk is formed by the delta and b chains.

It localises to the cell membrane. Functionally, f(1)F(0) ATP synthase produces ATP from ADP in the presence of a proton or sodium gradient. F-type ATPases consist of two structural domains, F(1) containing the extramembraneous catalytic core and F(0) containing the membrane proton channel, linked together by a central stalk and a peripheral stalk. During catalysis, ATP synthesis in the catalytic domain of F(1) is coupled via a rotary mechanism of the central stalk subunits to proton translocation. In terms of biological role, component of the F(0) channel, it forms part of the peripheral stalk, linking F(1) to F(0). In Lactococcus lactis subsp. lactis (strain IL1403) (Streptococcus lactis), this protein is ATP synthase subunit b.